The sequence spans 162 residues: Large ribosomal subunit protein uL10 (162 aa).

It belongs to the universal ribosomal protein uL10 family. In terms of assembly, part of the ribosomal stalk of the 50S ribosomal subunit. The N-terminus interacts with L11 and the large rRNA to form the base of the stalk. The C-terminus forms an elongated spine to which L12 dimers bind in a sequential fashion forming a multimeric L10(L12)X complex.

Forms part of the ribosomal stalk, playing a central role in the interaction of the ribosome with GTP-bound translation factors. This Borreliella burgdorferi (strain ATCC 35210 / DSM 4680 / CIP 102532 / B31) (Borrelia burgdorferi) protein is Large ribosomal subunit protein uL10 (rplJ).